Reading from the N-terminus, the 687-residue chain is Auxin response factor 14 (687 aa).

Residues 133–235 constitute a DNA-binding region (TF-B3); that stretch reads FCKTLTASDT…QLRLGVRRAV (103 aa).

The protein belongs to the ARF family. In terms of assembly, homo and heterodimers. Expressed in roots, culms, leaves and young panicles.

Its subcellular location is the nucleus. Functionally, auxin response factors (ARFs) are transcriptional factors that bind specifically to the DNA sequence 5'-TGTCTC-3' found in the auxin-responsive promoter elements (AuxREs). The sequence is that of Auxin response factor 14 (ARF14) from Oryza sativa subsp. japonica (Rice).